The sequence spans 283 residues: Thymidylate synthase (283 aa).

R22 is a dUMP binding site. C160 functions as the Nucleophile in the catalytic mechanism. DUMP is bound by residues R180 to D183, N191, and H221 to Y223. D183 provides a ligand contact to (6R)-5,10-methylene-5,6,7,8-tetrahydrofolate. S282 is a (6R)-5,10-methylene-5,6,7,8-tetrahydrofolate binding site.

Belongs to the thymidylate synthase family. Bacterial-type ThyA subfamily. As to quaternary structure, homodimer.

It localises to the cytoplasm. It carries out the reaction dUMP + (6R)-5,10-methylene-5,6,7,8-tetrahydrofolate = 7,8-dihydrofolate + dTMP. The protein operates within pyrimidine metabolism; dTTP biosynthesis. Catalyzes the reductive methylation of 2'-deoxyuridine-5'-monophosphate (dUMP) to 2'-deoxythymidine-5'-monophosphate (dTMP) while utilizing 5,10-methylenetetrahydrofolate (mTHF) as the methyl donor and reductant in the reaction, yielding dihydrofolate (DHF) as a by-product. This enzymatic reaction provides an intracellular de novo source of dTMP, an essential precursor for DNA biosynthesis. The chain is Thymidylate synthase from Haemophilus influenzae (strain PittEE).